The following is a 324-amino-acid chain: Quinolinate synthase 1 (324 aa).

2 residues coordinate iminosuccinate: His-48 and Ser-66. Position 111 (Cys-111) interacts with [4Fe-4S] cluster. Iminosuccinate contacts are provided by residues 137 to 139 and Ser-154; that span reads YVN. Cys-196 serves as a coordination point for [4Fe-4S] cluster. Iminosuccinate-binding positions include 222 to 224 and Thr-239; that span reads HPE. Residue Cys-282 participates in [4Fe-4S] cluster binding.

It belongs to the quinolinate synthase family. Type 2 subfamily. The cofactor is [4Fe-4S] cluster.

Its subcellular location is the cytoplasm. The enzyme catalyses iminosuccinate + dihydroxyacetone phosphate = quinolinate + phosphate + 2 H2O + H(+). The protein operates within cofactor biosynthesis; NAD(+) biosynthesis; quinolinate from iminoaspartate: step 1/1. In terms of biological role, catalyzes the condensation of iminoaspartate with dihydroxyacetone phosphate to form quinolinate. The protein is Quinolinate synthase 1 of Mesorhizobium japonicum (strain LMG 29417 / CECT 9101 / MAFF 303099) (Mesorhizobium loti (strain MAFF 303099)).